The following is a 91-amino-acid chain: Small ribosomal subunit protein uS19 (91 aa).

The protein belongs to the universal ribosomal protein uS19 family.

Protein S19 forms a complex with S13 that binds strongly to the 16S ribosomal RNA. The protein is Small ribosomal subunit protein uS19 of Prochlorococcus marinus (strain MIT 9515).